A 201-amino-acid chain; its full sequence is Recombination protein RecR (201 aa).

Residues 57-72 (CKYCSNFGNKDECDIC) form a C4-type zinc finger. In terms of domain architecture, Toprim spans 80–176 (TKLMIVTTNE…QIYRIGFGIP (97 aa)).

It belongs to the RecR family.

In terms of biological role, may play a role in DNA repair. It seems to be involved in an RecBC-independent recombinational process of DNA repair. It may act with RecF and RecO. The chain is Recombination protein RecR from Ureaplasma urealyticum serovar 10 (strain ATCC 33699 / Western).